Consider the following 237-residue polypeptide: Ribosomally synthesized cyclic peptide ustiloxin B precursosr (237 aa).

Positions 1–19 (MKLILTLLVSGLCALAAPA) are cleaved as a signal peptide. 2 propeptides span residues 20-22 (AKR) and 234-237 (HGGH).

Post-translationally, ustA is processed by the subtilisin-like endoprotease kex2 that is outside the ustiloxin B gene cluster, at the C-terminal side of Arg-Lys, after transfer to Golgi apparatus through the endoplasmic reticulum (ER). Cleavage by kex2 generates 16 peptides YAIG-I to YAIG-XVI. To process the precursor peptide further, at least two peptidases are necessary to cleave the N-terminal and C-terminal sides of the Tyr-Ala-Ile-Gly core peptide which serves as backbone for the synthesis of ustiloxin B, through cyclization and modification of the tyrosine. One of the two peptidases must be the serine peptidase ustP; and the other pepdidase is probably ustH. Macrocyclization of the core peptide derived from ustA requires the tyrosinase ustQ, as well as the homologous oxidases ustYa and ustYb, and leads to the production of the first cyclization product N-desmethylustiloxin F. For the formation of N-desmethylustiloxin F, three oxidation steps are required, hydroxylation at the benzylic position, hydroxylation at either the aromatic ring of Tyr or beta-position of Ile, and oxidative cyclization. UstQ may catalyze the oxidation of a phenol moiety, whereas the ustYa and ustYb are most likely responsible for the remaining two-step oxidations. N-desmethylustiloxin F is then methylated by ustM to yield ustiloxin F which in turn substrate of the cytochrome P450 monooxygenase ustC which catalyzes the formation of S-deoxyustiloxin H. The flavoprotein monooxygenases ustF1 and ustF2 then participate in the modification of the side chain of S-deoxyustiloxin H, leading to the synthesis of an oxime intermediate, via ustiloxin H. Finally, carboxylative dehydration performed by the cysteine desulfurase-like protein ustD yields ustiloxin B.

It participates in mycotoxin biosynthesis. Functionally, ribosomally synthesized cyclic peptide ustiloxin B precursor: Part of the gene cluster that mediates the biosynthesis of the secondary metabolite ustiloxin B, an antimitotic tetrapeptide. The ustA translated product contains a 16-fold repeated peptide embedding the tetrapeptide Tyr-Ala-Ile-Gly, that is converted into the cyclic moiety of ustiloxin B. In Aspergillus flavus (strain ATCC 200026 / FGSC A1120 / IAM 13836 / NRRL 3357 / JCM 12722 / SRRC 167), this protein is Ribosomally synthesized cyclic peptide ustiloxin B precursosr.